A 243-amino-acid chain; its full sequence is Ribosomal RNA small subunit methyltransferase G (243 aa).

S-adenosyl-L-methionine-binding positions include Gly79, Phe84, 130-131 (AE), and Arg150. The disordered stretch occupies residues 222–243 (KPTPNKYPRKPGIPNKQPLGGA).

This sequence belongs to the methyltransferase superfamily. RNA methyltransferase RsmG family.

It is found in the cytoplasm. Its function is as follows. Specifically methylates the N7 position of a guanine in 16S rRNA. The protein is Ribosomal RNA small subunit methyltransferase G of Lacticaseibacillus paracasei (strain ATCC 334 / BCRC 17002 / CCUG 31169 / CIP 107868 / KCTC 3260 / NRRL B-441) (Lactobacillus paracasei).